The following is a 168-amino-acid chain: Small ribosomal subunit protein uS9 (168 aa).

Positions 1–11 (MAQNEELTTEA) are enriched in low complexity. Positions 1–36 (MAQNEELTTEAVEAEENPTSYTSESSAAEAAPKKER) are disordered.

It belongs to the universal ribosomal protein uS9 family.

This Pseudarthrobacter chlorophenolicus (strain ATCC 700700 / DSM 12829 / CIP 107037 / JCM 12360 / KCTC 9906 / NCIMB 13794 / A6) (Arthrobacter chlorophenolicus) protein is Small ribosomal subunit protein uS9.